The primary structure comprises 103 residues: Large ribosomal subunit protein bL21 (103 aa).

It belongs to the bacterial ribosomal protein bL21 family. In terms of assembly, part of the 50S ribosomal subunit. Contacts protein L20.

This protein binds to 23S rRNA in the presence of protein L20. The sequence is that of Large ribosomal subunit protein bL21 from Desulforapulum autotrophicum (strain ATCC 43914 / DSM 3382 / VKM B-1955 / HRM2) (Desulfobacterium autotrophicum).